Here is a 762-residue protein sequence, read N- to C-terminus: Catalase-peroxidase (762 aa).

The disordered stretch occupies residues methionine 1–threonine 22. A cross-link (tryptophyl-tyrosyl-methioninium (Trp-Tyr) (with M-268)) is located at residues tryptophan 96–tyrosine 242. Histidine 97 functions as the Proton acceptor in the catalytic mechanism. The segment at residues tyrosine 242–methionine 268 is a cross-link (tryptophyl-tyrosyl-methioninium (Tyr-Met) (with W-96)). Residue histidine 283 participates in heme b binding.

Belongs to the peroxidase family. Peroxidase/catalase subfamily. In terms of assembly, homodimer or homotetramer. It depends on heme b as a cofactor. Formation of the three residue Trp-Tyr-Met cross-link is important for the catalase, but not the peroxidase activity of the enzyme.

It localises to the cytoplasm. The enzyme catalyses H2O2 + AH2 = A + 2 H2O. It carries out the reaction 2 H2O2 = O2 + 2 H2O. Its function is as follows. Bifunctional enzyme with both catalase and broad-spectrum peroxidase activity. This chain is Catalase-peroxidase, found in Aspergillus niger (strain ATCC MYA-4892 / CBS 513.88 / FGSC A1513).